The primary structure comprises 63 residues: Large ribosomal subunit protein bL28 (63 aa).

Belongs to the bacterial ribosomal protein bL28 family.

In Brachyspira hyodysenteriae (strain ATCC 49526 / WA1), this protein is Large ribosomal subunit protein bL28.